The following is a 241-amino-acid chain: Adenosylcobinamide-GDP ribazoletransferase (241 aa).

5 consecutive transmembrane segments (helical) span residues 24-44 (IVFFFTITGAITGLMAASIFY), 48-68 (FINQLLASVASVSFLIIIYGF), 103-123 (VVTFFIIYIITISLLSSFNSI), 175-195 (VIILIFLIFYKYIIFTMFSLI), and 218-238 (IIGFTGELSRLISLLLILISF).

Belongs to the CobS family. The cofactor is Mg(2+).

The protein localises to the cell membrane. It carries out the reaction alpha-ribazole + adenosylcob(III)inamide-GDP = adenosylcob(III)alamin + GMP + H(+). The enzyme catalyses alpha-ribazole 5'-phosphate + adenosylcob(III)inamide-GDP = adenosylcob(III)alamin 5'-phosphate + GMP + H(+). It participates in cofactor biosynthesis; adenosylcobalamin biosynthesis; adenosylcobalamin from cob(II)yrinate a,c-diamide: step 7/7. Its function is as follows. Joins adenosylcobinamide-GDP and alpha-ribazole to generate adenosylcobalamin (Ado-cobalamin). Also synthesizes adenosylcobalamin 5'-phosphate from adenosylcobinamide-GDP and alpha-ribazole 5'-phosphate. The chain is Adenosylcobinamide-GDP ribazoletransferase from Picrophilus torridus (strain ATCC 700027 / DSM 9790 / JCM 10055 / NBRC 100828 / KAW 2/3).